Reading from the N-terminus, the 378-residue chain is Transmembrane 6 superfamily member 2 (378 aa).

Transmembrane regions (helical) follow at residues 10 to 30, 34 to 54, 63 to 83, 110 to 130, 140 to 160, 170 to 190, 219 to 239, 269 to 289, 291 to 311, and 332 to 352; these read TVAM…VSAF, LFVV…VYSL, PLYA…VIAL, IFIC…MAGA, LGLY…PGNI, PTFF…VRIF, LALI…GLVV, MLMY…ALAF, GCSW…QAQF, and TWAT…LLAF. EXPERA domains are found at residues 61–186 and 217–351; these read YDPL…CWAG and ADLA…HLLA.

It belongs to the TM6SF family. Highly expressed in the liver at both the mRNA and protein levels.

It localises to the endoplasmic reticulum membrane. The protein localises to the endoplasmic reticulum-Golgi intermediate compartment membrane. Its function is as follows. Regulator of liver fat metabolism influencing triglyceride secretion and hepatic lipid droplet content. May function as sterol isomerase. This Mus musculus (Mouse) protein is Transmembrane 6 superfamily member 2 (Tm6sf2).